A 572-amino-acid polypeptide reads, in one-letter code: Cytosolic Fe-S cluster assembly factor NAR1 (572 aa).

The [4Fe-4S] cluster site is built by Cys-20, Cys-62, Cys-65, Cys-68, Cys-205, and Cys-260. The interval 416–436 (ARPSRMPGGKPIGSARRPNGK) is disordered. Cys-450 and Cys-454 together coordinate [4Fe-4S] cluster.

This sequence belongs to the NARF family.

Component of the cytosolic Fe/S protein assembly machinery. Required for maturation of extramitochondrial Fe/S proteins. May play a role in the transfer of pre-assembled Fe/S clusters to target apoproteins. The chain is Cytosolic Fe-S cluster assembly factor NAR1 (NAR1) from Botryotinia fuckeliana (strain B05.10) (Noble rot fungus).